A 268-amino-acid chain; its full sequence is Glutamate racemase (268 aa).

Residues 13–14 (DS) and 45–46 (YG) each bind substrate. The Proton donor/acceptor role is filled by Cys-77. 78–79 (NT) provides a ligand contact to substrate. The active-site Proton donor/acceptor is Cys-185. 186–187 (TH) is a binding site for substrate.

The protein belongs to the aspartate/glutamate racemases family.

It carries out the reaction L-glutamate = D-glutamate. Its pathway is cell wall biogenesis; peptidoglycan biosynthesis. Functionally, provides the (R)-glutamate required for cell wall biosynthesis. The polypeptide is Glutamate racemase (Vibrio campbellii (strain ATCC BAA-1116)).